The sequence spans 1358 residues: DNA-directed RNA polymerase subunit beta (1358 aa).

It belongs to the RNA polymerase beta chain family. As to quaternary structure, the RNAP catalytic core consists of 2 alpha, 1 beta, 1 beta' and 1 omega subunit. When a sigma factor is associated with the core the holoenzyme is formed, which can initiate transcription.

The catalysed reaction is RNA(n) + a ribonucleoside 5'-triphosphate = RNA(n+1) + diphosphate. In terms of biological role, DNA-dependent RNA polymerase catalyzes the transcription of DNA into RNA using the four ribonucleoside triphosphates as substrates. The protein is DNA-directed RNA polymerase subunit beta of Francisella tularensis subsp. novicida (strain U112).